The chain runs to 150 residues: Large ribosomal subunit protein bL9 (150 aa).

This sequence belongs to the bacterial ribosomal protein bL9 family.

In terms of biological role, binds to the 23S rRNA. The sequence is that of Large ribosomal subunit protein bL9 from Shewanella sediminis (strain HAW-EB3).